A 239-amino-acid chain; its full sequence is MTIKAISVDIDGTITYPDRRLHEKALEAIRLAESLGVPVMLVTGNTVQFGEAAAILIGTSGPVVGEDGGALSIKEGKLRKRVYLTNMDEEWILWGELKKRYPEALLSFSMPERKAGLVVLRTVPVKAVRELIKELGLNLIAVDSGFAIHIKKPWINKGTGIEKACEYLGISPKEVAHIGDGENDLDAFGVVGYRVAVAQAPESLKEKADYVTTKPYGEGGAEAIEHILRKFGYLPEEKT.

The Nucleophile role is filled by Asp-9. The Mg(2+) site is built by Asp-9 and Asp-11. Lys-157 is a binding site for substrate. Mg(2+)-binding residues include Asp-180 and Asp-184.

The protein belongs to the archaeal SPP-like hydrolase family. Mg(2+) is required as a cofactor.

The catalysed reaction is 2-phosphoglycolate + H2O = glycolate + phosphate. Catalyzes the dephosphorylation of 2-phosphoglycolate. The polypeptide is Phosphoglycolate phosphatase (Thermococcus kodakarensis (strain ATCC BAA-918 / JCM 12380 / KOD1) (Pyrococcus kodakaraensis (strain KOD1))).